The following is a 479-amino-acid chain: Cysteine protease effector 1 (479 aa).

The sequence is that of Cysteine protease effector 1 from Escherichia coli O1:K1:H7 (strain ATCC 11775 / DSM 30083 / JCM 1649 / NBRC 102203 / NCTC 9001 / U5/41).